The following is a 133-amino-acid chain: Salivary cystatin-L2 (133 aa).

The signal sequence occupies residues 1–18 (MTSSLALVLLLGGAAVCA). In terms of domain architecture, Cystatin spans 34–118 (DDPKYLELAH…RTCTAVIYEN (85 aa)).

Belongs to the cystatin family. As to expression, salivary gland, midgut and other tissues.

It localises to the secreted. Inhibitor of cysteine proteinases. Inhibits host cathepsin L (CTSL) and S (CTSS). Modulates production of various cytokines and chemokines in lipopolysaccharide (LPS)-stimulated mouse dendritic cell. Suppresses maturation of mouse bone-marrow-derived dendritic cells (BMDCs). Its function is as follows. (Microbial infection) Modulates Borrelia miyamotoi-stimulated immune responses in mice by suppressing activities of host dendritic and T-cells. The protein is Salivary cystatin-L2 of Ixodes persulcatus (Taiga tick).